A 195-amino-acid chain; its full sequence is Holliday junction branch migration complex subunit RuvA (195 aa).

Residues 1 to 66 (MNYLVFKVIY…LIIKDLYGFR (66 aa)) form a domain I region. Residues 67 to 141 (TYNERLLFID…KYINKVSEKN (75 aa)) are domain II. A region of interest (flexible linker) is located at residue asparagine 141. The segment at 141–195 (NPWAKELSIGLENLGYDKKDIEYAITKVKVDTQQNIDISEIIGCAIKEISLRHEN) is domain III.

This sequence belongs to the RuvA family. In terms of assembly, homotetramer. Forms an RuvA(8)-RuvB(12)-Holliday junction (HJ) complex. HJ DNA is sandwiched between 2 RuvA tetramers; dsDNA enters through RuvA and exits via RuvB. An RuvB hexamer assembles on each DNA strand where it exits the tetramer. Each RuvB hexamer is contacted by two RuvA subunits (via domain III) on 2 adjacent RuvB subunits; this complex drives branch migration. In the full resolvosome a probable DNA-RuvA(4)-RuvB(12)-RuvC(2) complex forms which resolves the HJ.

The protein localises to the cytoplasm. In terms of biological role, the RuvA-RuvB-RuvC complex processes Holliday junction (HJ) DNA during genetic recombination and DNA repair, while the RuvA-RuvB complex plays an important role in the rescue of blocked DNA replication forks via replication fork reversal (RFR). RuvA specifically binds to HJ cruciform DNA, conferring on it an open structure. The RuvB hexamer acts as an ATP-dependent pump, pulling dsDNA into and through the RuvAB complex. HJ branch migration allows RuvC to scan DNA until it finds its consensus sequence, where it cleaves and resolves the cruciform DNA. The polypeptide is Holliday junction branch migration complex subunit RuvA (Ureaplasma urealyticum serovar 10 (strain ATCC 33699 / Western)).